Consider the following 141-residue polypeptide: Putative 8-oxo-dGTP diphosphatase 2 (141 aa).

The Nudix hydrolase domain maps to 2-131; that stretch reads LNQIVVAGAI…WIADLARTLN (130 aa). Gly37, Glu52, Glu55, and Glu56 together coordinate Mg(2+). Residues 37-58 carry the Nudix box motif; it reads GKVAAGETERAALARELAEELG.

The protein belongs to the Nudix hydrolase family. Mg(2+) is required as a cofactor. The cofactor is Mn(2+).

The enzyme catalyses 8-oxo-dGTP + H2O = 8-oxo-dGMP + diphosphate + H(+). May be involved in the GO system responsible for removing an oxidatively damaged form of guanine (7,8-dihydro-8-oxoguanine, 8-oxo-dGTP) from DNA and the nucleotide pool. 8-oxo-dGTP is inserted opposite dA and dC residues of template DNA with almost equal efficiency thus leading to A.T to G.C transversions. MutT specifically degrades 8-oxo-dGTP to the monophosphate. The sequence is that of Putative 8-oxo-dGTP diphosphatase 2 (mutT2) from Mycobacterium tuberculosis (strain CDC 1551 / Oshkosh).